A 277-amino-acid polypeptide reads, in one-letter code: Heme oxygenase (277 aa).

Histidine 29 lines the heme b pocket.

Belongs to the heme oxygenase family.

Its subcellular location is the microsome. The protein resides in the endoplasmic reticulum. The catalysed reaction is heme b + 3 reduced [NADPH--hemoprotein reductase] + 3 O2 = biliverdin IXalpha + CO + Fe(2+) + 3 oxidized [NADPH--hemoprotein reductase] + 3 H2O + H(+). Its function is as follows. Heme oxygenase cleaves the heme ring at the alpha methene bridge to form biliverdin. Biliverdin is subsequently converted to bilirubin by biliverdin reductase. Under physiological conditions, the activity of heme oxygenase is highest in the spleen, where senescent erythrocytes are sequestrated and destroyed. This is Heme oxygenase (hmox) from Takifugu rubripes (Japanese pufferfish).